The primary structure comprises 485 residues: ATP synthase subunit beta (485 aa).

Over residues Met1–Thr11 the composition is skewed to basic and acidic residues. The segment at Met1–Gly20 is disordered. Gly170 to Thr177 is a binding site for ATP.

It belongs to the ATPase alpha/beta chains family. In terms of assembly, F-type ATPases have 2 components, CF(1) - the catalytic core - and CF(0) - the membrane proton channel. CF(1) has five subunits: alpha(3), beta(3), gamma(1), delta(1), epsilon(1). CF(0) has three main subunits: a(1), b(2) and c(9-12). The alpha and beta chains form an alternating ring which encloses part of the gamma chain. CF(1) is attached to CF(0) by a central stalk formed by the gamma and epsilon chains, while a peripheral stalk is formed by the delta and b chains.

The protein resides in the cell membrane. It catalyses the reaction ATP + H2O + 4 H(+)(in) = ADP + phosphate + 5 H(+)(out). Functionally, produces ATP from ADP in the presence of a proton gradient across the membrane. The catalytic sites are hosted primarily by the beta subunits. The chain is ATP synthase subunit beta from Mycobacterium avium (strain 104).